Consider the following 147-residue polypeptide: Probable cytidine deaminase (147 aa).

Residues 4–130 (EELEKCIDAA…KLLPGLFSQE (127 aa)) enclose the CMP/dCMP-type deaminase domain. Residue 45-51 (NVENSSY) coordinates substrate. Residue C56 coordinates Zn(2+). The active-site Proton donor is the E58. Residues C90 and C93 each contribute to the Zn(2+) site.

This sequence belongs to the cytidine and deoxycytidylate deaminase family. Zn(2+) is required as a cofactor.

The enzyme catalyses cytidine + H2O + H(+) = uridine + NH4(+). The catalysed reaction is 2'-deoxycytidine + H2O + H(+) = 2'-deoxyuridine + NH4(+). Its function is as follows. This enzyme scavenges exogenous and endogenous cytidine and 2'-deoxycytidine for UMP synthesis. In Dictyostelium discoideum (Social amoeba), this protein is Probable cytidine deaminase (cda).